A 516-amino-acid chain; its full sequence is Extracellular endo-inulinase inuB (516 aa).

The first 25 residues, 1 to 25 (MLNPKVAYMVWMTCLGLTLPSQAQS), serve as a signal peptide directing secretion. Substrate contacts are provided by residues 40 to 43 (WMNE), Gln-59, Trp-67, and 99 to 100 (FT). The active site involves Glu-43. N-linked (GlcNAc...) asparagine glycosylation occurs at Asn-109. Substrate contacts are provided by residues 175 to 176 (RD) and Glu-233. 3 N-linked (GlcNAc...) asparagine glycosylation sites follow: Asn-372, Asn-419, and Asn-424.

Belongs to the glycosyl hydrolase 32 family.

Its subcellular location is the secreted. The enzyme catalyses Endohydrolysis of (2-&gt;1)-beta-D-fructosidic linkages in inulin.. Its function is as follows. Endo-inulinase involved in utilization of the plant storage polymer inulin, consisting of fructooligosaccharides with a degree of polymerization (DP) value from 2 to 60. This chain is Extracellular endo-inulinase inuB (inuB), found in Aspergillus niger.